We begin with the raw amino-acid sequence, 631 residues long: Dolichyl-diphosphooligosaccharide--protein glycosyltransferase subunit 2 (631 aa).

A signal peptide spans 1–22 (MAPPGSSTVFLLALTIIASTWA). Topologically, residues 23-540 (LTPTHYLTKH…REPEKRPPTV (518 aa)) are lumenal. A glycan (N-linked (GlcNAc...) asparagine) is linked at N106. A Glycyl lysine isopeptide (Lys-Gly) (interchain with G-Cter in ubiquitin) cross-link involves residue K154. A helical membrane pass occupies residues 541–561 (VSNTFTALILSPLLLLFALWI). At 562–571 (RIGANVSNFT) the chain is on the cytoplasmic side. The helical transmembrane segment at 572-592 (FAPSTIIFHLGHAAMLGLMYV) threads the bilayer. Topologically, residues 593–596 (YWTQ) are lumenal. A helical membrane pass occupies residues 597–617 (LNMFQTLKYLAILGSVTFLAG). Residues 618–631 (NRMLAQQAVKRTAH) are Cytoplasmic-facing.

Belongs to the SWP1 family. Component of the oligosaccharyltransferase (OST) complex. OST exists in two different complex forms which contain common core subunits RPN1, RPN2, OST48, OST4, DAD1 and TMEM258, either STT3A or STT3B as catalytic subunits, and form-specific accessory subunits. STT3A complex assembly occurs through the formation of 3 subcomplexes. Subcomplex 1 contains RPN1 and TMEM258, subcomplex 2 contains the STT3A-specific subunits STT3A, DC2/OSTC, and KCP2 as well as the core subunit OST4, and subcomplex 3 contains RPN2, DAD1, and OST48. The STT3A complex can form stable complexes with the Sec61 complex or with both the Sec61 and TRAP complexes. Interacts with DDI2. Interacts with TMEM35A/NACHO. In terms of tissue distribution, expressed in all tissues tested.

The protein resides in the endoplasmic reticulum. It localises to the endoplasmic reticulum membrane. It participates in protein modification; protein glycosylation. Its function is as follows. Subunit of the oligosaccharyl transferase (OST) complex that catalyzes the initial transfer of a defined glycan (Glc(3)Man(9)GlcNAc(2) in eukaryotes) from the lipid carrier dolichol-pyrophosphate to an asparagine residue within an Asn-X-Ser/Thr consensus motif in nascent polypeptide chains, the first step in protein N-glycosylation. N-glycosylation occurs cotranslationally and the complex associates with the Sec61 complex at the channel-forming translocon complex that mediates protein translocation across the endoplasmic reticulum (ER). All subunits are required for a maximal enzyme activity. The protein is Dolichyl-diphosphooligosaccharide--protein glycosyltransferase subunit 2 of Homo sapiens (Human).